Reading from the N-terminus, the 145-residue chain is AN1-type zinc finger protein 2A (145 aa).

2 AN1-type zinc fingers span residues proline 4–valine 52 and lysine 94–isoleucine 142. Positions 10, 15, 25, 28, 33, 36, 42, 44, 100, 105, 115, 118, 123, 126, 132, and 134 each coordinate Zn(2+).

It localises to the cytoplasm. The protein resides in the nucleus. The polypeptide is AN1-type zinc finger protein 2A (ZFAND2A) (Homo sapiens (Human)).